Here is a 152-residue protein sequence, read N- to C-terminus: Large ribosomal subunit protein uL30 (152 aa).

This sequence belongs to the universal ribosomal protein uL30 family. As to quaternary structure, part of the 50S ribosomal subunit.

This is Large ribosomal subunit protein uL30 from Archaeoglobus fulgidus (strain ATCC 49558 / DSM 4304 / JCM 9628 / NBRC 100126 / VC-16).